The chain runs to 127 residues: Large ribosomal subunit protein uL18 (127 aa).

It belongs to the universal ribosomal protein uL18 family. As to quaternary structure, part of the 50S ribosomal subunit; part of the 5S rRNA/L5/L18/L25 subcomplex. Contacts the 5S and 23S rRNAs.

Its function is as follows. This is one of the proteins that bind and probably mediate the attachment of the 5S RNA into the large ribosomal subunit, where it forms part of the central protuberance. The sequence is that of Large ribosomal subunit protein uL18 from Streptomyces coelicolor (strain ATCC BAA-471 / A3(2) / M145).